The primary structure comprises 310 residues: Protein FAM153A (310 aa).

Disordered regions lie at residues 39–58 (LGVP…LCPP), 108–136 (QTNG…HTME), 156–184 (SYNG…DLEE), and 250–297 (TITG…KKSR). Positions 259 to 268 (SASPSSAPAE) are enriched in low complexity. Positions 270-282 (ATEKTKVEEEVKT) are enriched in basic and acidic residues. Residues 283–297 (RKPKKKTRKPSKKSR) are compositionally biased toward basic residues.

This sequence belongs to the FAM153 family.

The sequence is that of Protein FAM153A (FAM153A) from Homo sapiens (Human).